Here is a 189-residue protein sequence, read N- to C-terminus: Peroxiredoxin sll1621 (189 aa).

Residues 2 to 177 enclose the Thioredoxin domain; sequence TPERVPSVVF…MLAYLKGAEA (176 aa). Cys-55 functions as the Cysteine sulfenic acid (-SOH) intermediate (for peroxiredoxin activity) in the catalytic mechanism.

This sequence belongs to the peroxiredoxin family. Prx5 subfamily. Monomer.

It carries out the reaction a hydroperoxide + 2 glutathione = an alcohol + glutathione disulfide + H2O. Its function is as follows. Thiol-specific peroxidase that catalyzes the reduction of hydrogen peroxide and organic hydroperoxides to water and alcohols, respectively. Plays a role in cell protection against oxidative stress by detoxifying peroxides. The protein is Peroxiredoxin sll1621 of Synechocystis sp. (strain ATCC 27184 / PCC 6803 / Kazusa).